Consider the following 489-residue polypeptide: Ent-kaurenoic acid oxidase 2 (489 aa).

A helical transmembrane segment spans residues 5 to 25; sequence GLILMWFPLIILGLFVLKWVL. Cys436 is a heme binding site.

This sequence belongs to the cytochrome P450 family. The cofactor is heme. As to expression, widely expressed. Highly expressed in influorescence stem, influorescence, and silique tissue. Weakly expressed in cauline and rosette leaves. Expressed at a weaker level in stem and influorescence than AtKAO1/CYP88A3.

The protein resides in the endoplasmic reticulum membrane. It carries out the reaction ent-kaur-16-en-19-oate + 3 reduced [NADPH--hemoprotein reductase] + 3 O2 = gibberellin A12 + 3 oxidized [NADPH--hemoprotein reductase] + 4 H2O + 4 H(+). It catalyses the reaction ent-kaur-16-en-19-oate + reduced [NADPH--hemoprotein reductase] + O2 = ent-7alpha-hydroxykaur-16-en-19-oate + oxidized [NADPH--hemoprotein reductase] + H2O + H(+). The enzyme catalyses ent-7alpha-hydroxykaur-16-en-19-oate + reduced [NADPH--hemoprotein reductase] + O2 = gibberellin A12 aldehyde + oxidized [NADPH--hemoprotein reductase] + 2 H2O + H(+). The catalysed reaction is gibberellin A12 aldehyde + reduced [NADPH--hemoprotein reductase] + O2 = gibberellin A12 + oxidized [NADPH--hemoprotein reductase] + H2O + 2 H(+). It functions in the pathway plant hormone biosynthesis; gibberellin biosynthesis. Catalyzes three successive oxidations of ent-kaurenoic acid giving gibberellin 12 (GA12), a key step in gibberellins (GAs) biosynthesis. GAs, which are involved many processes, including stem elongation, play a central role in plant development. The protein is Ent-kaurenoic acid oxidase 2 of Arabidopsis thaliana (Mouse-ear cress).